The chain runs to 380 residues: Protein RecA (380 aa).

65–72 (GPESSGKT) is an ATP binding site. A disordered region spans residues 329–380 (DATGEETSETDDQAKEAKDKGTAKNGSKGQSKSTKATPAETALDLGDQPTEK). Basic and acidic residues predominate over residues 340–350 (DQAKEAKDKGT). The span at 352-364 (KNGSKGQSKSTKA) shows a compositional bias: polar residues.

The protein belongs to the RecA family.

It is found in the cytoplasm. In terms of biological role, can catalyze the hydrolysis of ATP in the presence of single-stranded DNA, the ATP-dependent uptake of single-stranded DNA by duplex DNA, and the ATP-dependent hybridization of homologous single-stranded DNAs. It interacts with LexA causing its activation and leading to its autocatalytic cleavage. This chain is Protein RecA, found in Lactiplantibacillus plantarum (strain ATCC BAA-793 / NCIMB 8826 / WCFS1) (Lactobacillus plantarum).